The primary structure comprises 388 residues: Succinate--CoA ligase [ADP-forming] subunit beta (388 aa).

The ATP-grasp domain maps to 9 to 244 (KQLFARYGLP…QSQEDPREAQ (236 aa)). ATP-binding positions include K46, 53 to 55 (GRG), E99, T102, and E107. 2 residues coordinate Mg(2+): N199 and D213. Residues N264 and 321–323 (GIV) each bind substrate.

It belongs to the succinate/malate CoA ligase beta subunit family. In terms of assembly, heterotetramer of two alpha and two beta subunits. The cofactor is Mg(2+).

It carries out the reaction succinate + ATP + CoA = succinyl-CoA + ADP + phosphate. The catalysed reaction is GTP + succinate + CoA = succinyl-CoA + GDP + phosphate. The protein operates within carbohydrate metabolism; tricarboxylic acid cycle; succinate from succinyl-CoA (ligase route): step 1/1. Functionally, succinyl-CoA synthetase functions in the citric acid cycle (TCA), coupling the hydrolysis of succinyl-CoA to the synthesis of either ATP or GTP and thus represents the only step of substrate-level phosphorylation in the TCA. The beta subunit provides nucleotide specificity of the enzyme and binds the substrate succinate, while the binding sites for coenzyme A and phosphate are found in the alpha subunit. The chain is Succinate--CoA ligase [ADP-forming] subunit beta from Salmonella arizonae (strain ATCC BAA-731 / CDC346-86 / RSK2980).